A 67-amino-acid polypeptide reads, in one-letter code: MCILKLPIVLLVLSVAVNHLQASPVESHQVEKRKCNTVTCATQRLANFLIHSSNNFGAIFSPPSVGS.

The first 22 residues, 1–22, serve as a signal peptide directing secretion; it reads MCILKLPIVLLVLSVAVNHLQA. A propeptide spanning residues 23 to 31 is cleaved from the precursor; the sequence is SPVESHQVE. Cys35 and Cys40 form a disulfide bridge.

It belongs to the calcitonin family. Can form homodimers. Interacts with IDE and INS. Interaction with INS inhibits homodimerization and fibril formation.

The protein resides in the secreted. Amylin/IAPP is a glucoregulatory peptide hormone that plays an important role in the regulation of energy homeostasis. Selectively inhibits insulin-stimulated glucose utilization and glycogen deposition in muscle, while not affecting adipocyte glucose metabolism. IAPP function is mediated by the CALCR-RAMPs (AMYRs) receptor complexes. Amylin can also bind CALCR receptor in the absence of RAMPs, although it is more selective for AMYRs. The polypeptide is Islet amyloid polypeptide (IAPP) (Oryctolagus cuniculus (Rabbit)).